The chain runs to 229 residues: NAD(P)H-hydrate epimerase (229 aa).

Residues 10 to 217 (AINVDLELFN…ALQRKYELNL (208 aa)) enclose the YjeF N-terminal domain. (6S)-NADPHX is bound at residue 60 to 64 (NNGGD). Residues N61 and D125 each coordinate K(+). Residues 129–135 (GFSFKPP) and D158 contribute to the (6S)-NADPHX site. Position 161 (S161) interacts with K(+).

Belongs to the NnrE/AIBP family. Requires K(+) as cofactor.

It catalyses the reaction (6R)-NADHX = (6S)-NADHX. The enzyme catalyses (6R)-NADPHX = (6S)-NADPHX. Its function is as follows. Catalyzes the epimerization of the S- and R-forms of NAD(P)HX, a damaged form of NAD(P)H that is a result of enzymatic or heat-dependent hydration. This is a prerequisite for the S-specific NAD(P)H-hydrate dehydratase to allow the repair of both epimers of NAD(P)HX. In Drosophila mojavensis (Fruit fly), this protein is NAD(P)H-hydrate epimerase.